Reading from the N-terminus, the 341-residue chain is Tubulin beta chain (341 aa).

Positions 64, 68, 69, 70, 130, and 152 each coordinate GTP.

The protein belongs to the tubulin family. In terms of assembly, dimer of alpha and beta chains. A typical microtubule is a hollow water-filled tube with an outer diameter of 25 nm and an inner diameter of 15 nM. Alpha-beta heterodimers associate head-to-tail to form protofilaments running lengthwise along the microtubule wall with the beta-tubulin subunit facing the microtubule plus end conferring a structural polarity. Microtubules usually have 13 protofilaments but different protofilament numbers can be found in some organisms and specialized cells. Mg(2+) is required as a cofactor.

Its subcellular location is the cytoplasm. It localises to the cytoskeleton. Its function is as follows. Tubulin is the major constituent of microtubules, a cylinder consisting of laterally associated linear protofilaments composed of alpha- and beta-tubulin heterodimers. Microtubules grow by the addition of GTP-tubulin dimers to the microtubule end, where a stabilizing cap forms. Below the cap, tubulin dimers are in GDP-bound state, owing to GTPase activity of alpha-tubulin. In Haliotis discus (Abalone), this protein is Tubulin beta chain.